Consider the following 316-residue polypeptide: Ribosomal RNA small subunit methyltransferase H (316 aa).

S-adenosyl-L-methionine is bound by residues 35 to 37 (SGH), Asp-55, Phe-84, Asp-105, and Gln-112.

Belongs to the methyltransferase superfamily. RsmH family.

The protein resides in the cytoplasm. The catalysed reaction is cytidine(1402) in 16S rRNA + S-adenosyl-L-methionine = N(4)-methylcytidine(1402) in 16S rRNA + S-adenosyl-L-homocysteine + H(+). Its function is as follows. Specifically methylates the N4 position of cytidine in position 1402 (C1402) of 16S rRNA. The polypeptide is Ribosomal RNA small subunit methyltransferase H (Streptococcus pyogenes serotype M6 (strain ATCC BAA-946 / MGAS10394)).